A 382-amino-acid polypeptide reads, in one-letter code: Protein arginine N-methyltransferase PRMT10 (382 aa).

Residues 1 to 21 (MASLPNGAASASAASSAAGGG) are disordered. Residues 7–17 (GAASASAASSA) are compositionally biased toward low complexity. The region spanning 28-359 (EVDFANYFCT…KENHRLMDME (332 aa)) is the SAM-dependent MTase PRMT-type domain. Catalysis depends on residues glutamate 142 and glutamate 151. The interval 189–229 (ENKMEDLEIAMHDWNLFVEDTESYYGVNMNVLTKAYRAEHE) is dimerization arm.

The protein belongs to the class I-like SAM-binding methyltransferase superfamily. Protein arginine N-methyltransferase family. In terms of assembly, ring-like homodimer.

The catalysed reaction is L-arginyl-[protein] + 2 S-adenosyl-L-methionine = N(omega),N(omega)-dimethyl-L-arginyl-[protein] + 2 S-adenosyl-L-homocysteine + 2 H(+). Functionally, methylates (mono and asymmetric dimethylation) the guanidino nitrogens of arginyl residues in some proteins. This is Protein arginine N-methyltransferase PRMT10 (PRMT10) from Oryza sativa subsp. indica (Rice).